The chain runs to 962 residues: Nonribosomal peptide synthetase atqA (962 aa).

The interval 34–462 (AANTTEGIIA…DGRTKEMVNI (429 aa)) is adenylation (A) domain. The region spanning 595–672 (SAEEATILSI…GLCQRIAATS (78 aa)) is the Carrier domain. Serine 630 is modified (O-(pantetheine 4'-phosphoryl)serine). The tract at residues 694-951 (PLWLVHPGVG…KPEYVANFAK (258 aa)) is thioesterase (TE) domain.

This sequence belongs to the NRP synthetase family.

Its pathway is secondary metabolite biosynthesis. Its function is as follows. Nonribosomal peptide synthetase; part of the gene cluster that mediates the biosynthesis of asterriquinone CT5, a natural product that displays potential biological activities including antitumor and insulin mimic activities. The nonribosomal peptide synthetase atqA is responsible for the production of the benzoquinone derivative didemethylasterriquinone D (DDAQ D), via condensation of 2 indole pyruvic acid (IPA) molecules. The symmetric connectivity of the 2 IPA molecules is thought to arise by head-to-tail dual Claisen condensations catalyzed by the TE domain of atqA. DDAQ D represents the core structure of asterriquinones and is further modified by yet unidentified tailoring enzymes to lead to the production of asterriquinone CT5. The sequence is that of Nonribosomal peptide synthetase atqA from Aspergillus terreus (strain NIH 2624 / FGSC A1156).